We begin with the raw amino-acid sequence, 645 residues long: Rho GTPase-activating protein 25 (645 aa).

A PH domain is found at 46–151 (RPIKMGWLKK…WVKFLRRVAG (106 aa)). Residues 159 to 353 (QRLDETVAYE…MMIRDHEVLF (195 aa)) enclose the Rho-GAP domain. Disordered stretches follow at residues 355 to 444 (KSKD…QTLP) and 469 to 550 (FWSP…EEEI). Residues Ser362 and Ser395 each carry the phosphoserine modification. The segment covering 393 to 409 (TDSFSSMTSDSDTTSPT) has biased composition (low complexity). The residue at position 406 (Thr406) is a Phosphothreonine. Basic and acidic residues predominate over residues 420–431 (DSSKVPREKPGD). Residues 487–504 (SQDLRQLSDSQRTSTYDN) are compositionally biased toward polar residues. Ser536 is subject to Phosphoserine. Residues 541–644 (GKKNSGEEEI…VKSMKEPKTE (104 aa)) are a coiled coil.

Functionally, GTPase activator for the Rho-type GTPases by converting them to an inactive GDP-bound state. This chain is Rho GTPase-activating protein 25 (ARHGAP25), found in Homo sapiens (Human).